The primary structure comprises 79 residues: Conotoxin VnMSGL-0122 (79 aa).

A signal peptide spans 1-20; it reads MSGLGIMVLALLLLVFMATS. A propeptide spanning residues 21–44 is cleaved from the precursor; the sequence is HQDGGGKQATQRDAINVRRRRSIT. 3 disulfides stabilise this stretch: cysteine 52/cysteine 64, cysteine 56/cysteine 73, and cysteine 63/cysteine 77. Leucine 78 carries the post-translational modification Leucine amide.

This sequence belongs to the conotoxin O3 superfamily. As to expression, expressed by the venom duct.

It is found in the secreted. This Conus ventricosus (Mediterranean cone) protein is Conotoxin VnMSGL-0122.